The primary structure comprises 362 residues: 3-isopropylmalate dehydrogenase (362 aa).

77 to 88 (GPKWGTGAVRPE) is a binding site for NAD(+). The substrate site is built by Arg95, Arg105, Arg134, and Asp223. Residues Asp223, Asp248, and Asp252 each contribute to the Mg(2+) site. Residue 287–298 (GSAPDLPKGKVN) coordinates NAD(+).

The protein belongs to the isocitrate and isopropylmalate dehydrogenases family. As to quaternary structure, homodimer. It depends on Mg(2+) as a cofactor. The cofactor is Mn(2+).

It is found in the cytoplasm. The enzyme catalyses (2R,3S)-3-isopropylmalate + NAD(+) = 4-methyl-2-oxopentanoate + CO2 + NADH. It participates in amino-acid biosynthesis; L-leucine biosynthesis; L-leucine from 3-methyl-2-oxobutanoate: step 3/4. In terms of biological role, catalyzes the oxidation of 3-carboxy-2-hydroxy-4-methylpentanoate (3-isopropylmalate) to 3-carboxy-4-methyl-2-oxopentanoate. The product decarboxylates to 4-methyl-2 oxopentanoate. The chain is 3-isopropylmalate dehydrogenase (LEU2) from Zygosaccharomyces bailii.